The primary structure comprises 370 residues: Anhydro-N-acetylmuramic acid kinase (370 aa).

13–20 (GTSMDGVD) lines the ATP pocket.

It belongs to the anhydro-N-acetylmuramic acid kinase family.

It catalyses the reaction 1,6-anhydro-N-acetyl-beta-muramate + ATP + H2O = N-acetyl-D-muramate 6-phosphate + ADP + H(+). It participates in amino-sugar metabolism; 1,6-anhydro-N-acetylmuramate degradation. Its pathway is cell wall biogenesis; peptidoglycan recycling. Its function is as follows. Catalyzes the specific phosphorylation of 1,6-anhydro-N-acetylmuramic acid (anhMurNAc) with the simultaneous cleavage of the 1,6-anhydro ring, generating MurNAc-6-P. Is required for the utilization of anhMurNAc either imported from the medium or derived from its own cell wall murein, and thus plays a role in cell wall recycling. This Vibrio vulnificus (strain YJ016) protein is Anhydro-N-acetylmuramic acid kinase.